Reading from the N-terminus, the 430-residue chain is Tektin-2 (430 aa).

Coiled-coil stretches lie at residues 75–162 and 226–380; these read KEML…FQHL and KNRA…IACK.

It belongs to the tektin family. As to quaternary structure, microtubule inner protein component of sperm flagellar doublet microtubules. May interact with CCDC172. Post-translationally, tyrosine phosphorylated. Ubiquitinated, leading to its degradation. Deubiquitinated by USP16, promoting its stability.

The protein localises to the cytoplasm. It is found in the cytoskeleton. It localises to the cilium axoneme. Its subcellular location is the flagellum axoneme. The protein resides in the microtubule organizing center. In terms of biological role, microtubule inner protein (MIP) part of the dynein-decorated doublet microtubules (DMTs) in cilia and flagellar axoneme. Plays a key role in the assembly or attachment of the inner dynein arm to microtubules in sperm flagella and tracheal cilia. Forms filamentous polymers in the walls of ciliary and flagellar microtubules. The chain is Tektin-2 (Tekt2) from Rattus norvegicus (Rat).